Consider the following 175-residue polypeptide: B9 domain-containing protein 2 (175 aa).

Residues 2–118 (AEVHVIGQII…DCPTWRPLGS (117 aa)) form the C2 B9-type domain.

Belongs to the B9D family. Part of the tectonic-like complex (also named B9 complex). Interacts with TUBG1.

Its subcellular location is the cytoplasm. It localises to the cytoskeleton. The protein resides in the cilium basal body. The protein localises to the cilium axoneme. It is found in the nucleus. Functionally, component of the tectonic-like complex, a complex localized at the transition zone of primary cilia and acting as a barrier that prevents diffusion of transmembrane proteins between the cilia and plasma membranes. This Rattus norvegicus (Rat) protein is B9 domain-containing protein 2 (B9d2).